Here is a 107-residue protein sequence, read N- to C-terminus: Ferredoxin-1 (107 aa).

4Fe-4S ferredoxin-type domains lie at 2-30 and 31-60; these read AFVVTDNCIKCKYTDCVEVCPVDCFYEGP and NFLVIHPDECIDCALCEPECPAQAIFSEDE. [3Fe-4S] cluster contacts are provided by C9 and C17. The [4Fe-4S] cluster site is built by C21, C40, C43, and C46. C50 serves as a coordination point for [3Fe-4S] cluster. The interval 84-107 is disordered; that stretch reads EKKDPLPDAEDWDGVKGKLQHLER. Basic and acidic residues predominate over residues 96–107; it reads DGVKGKLQHLER.

It depends on [4Fe-4S] cluster as a cofactor. [3Fe-4S] cluster is required as a cofactor.

Ferredoxins are iron-sulfur proteins that transfer electrons in a wide variety of metabolic reactions. This ferredoxin could play a role in regulating gene expression by interacting directly with DNA. The sequence is that of Ferredoxin-1 (fdxA) from Azotobacter vinelandii.